A 129-amino-acid chain; its full sequence is 3-oxo-4,17-pregnadiene-20-carboxyl-CoA hydratase beta subunit (129 aa).

It belongs to the thioester dehydratase family. As to quaternary structure, heterodimer composed of ChsH1 and ChsH2. Two heterodimers combine to form a heterotetramer. The complex interacts with Ltp2 via the DUF35 C-terminal region of ChsH2. The ChsH1-ChsH2-Ltp2 protein complex is composed of two protomers that form a heterohexameric structure through the Ltp2 dimerization interface.

It catalyses the reaction 3-oxochola-4,17-dien-22-oyl-CoA + H2O = 17-hydroxy-3-oxochol-4-en-22-oyl-CoA. It carries out the reaction (2E)-octenoyl-CoA + H2O = 3-hydroxyoctanoyl-CoA. The catalysed reaction is (2E)-decenoyl-CoA + H2O = 3-hydroxydecanoyl-CoA. The protein operates within steroid metabolism; cholesterol degradation. With respect to regulation, in the absence of the Ltp2 aldolase, ChsH1/ChsH2 can hydrate only about 30% of the 3-OPDC-CoA substrate. Complete turnover requires the presence of Ltp2. In terms of biological role, involved in cholesterol side chain degradation. Catalyzes the hydration of 3-oxo-4,17-pregnadiene-20-carboxyl-CoA (3-OPDC-CoA) to form 17-hydroxy-3-oxo-4-pregnene-20-carboxyl-CoA (17-HOPC-CoA), in the modified beta-oxidation pathway for cholesterol side chain degradation. Can also use octenoyl-CoA and decenoyl-CoA, with lower efficiency. This Mycobacterium tuberculosis (strain ATCC 25618 / H37Rv) protein is 3-oxo-4,17-pregnadiene-20-carboxyl-CoA hydratase beta subunit.